The sequence spans 312 residues: Putative electron transfer flavoprotein subunit YdiR (312 aa).

254–282 (LYLTLGISGQIQHMVGGNGAKVIVAINKD) is an FAD binding site.

Belongs to the ETF alpha-subunit/FixB family. In terms of assembly, ydiR and YdiQ form a heterodimer.

Functionally, may play a role in a redox process. The protein is Putative electron transfer flavoprotein subunit YdiR (ydiR) of Escherichia coli (strain K12).